A 357-amino-acid chain; its full sequence is MFAKLESLERKYEDLERQLSAPDVVSDQERFRKLSKTHSDLSDVVAAFREYKKIAQDLEDNQEMAQDPDPEIRELAQAETKALKEAQVELEARLKVLLLPKDPMDEKNILLEIRAGTGGDEAALFAGDLFRMYTRYAETKRWKVEIMSQSETGSGGFKEVIASISGDKVYSRLKYESGAHRVQRVPATESQGRIHTSAVTVAIMPEAEEVDVAIDPNELRIDVYRSSGPGGQSVNTTDSAVRVTHIPSGLVVICQDEKSQHKNKAKALKVLRSRLLQVEQDKQRAEQEAARRSQVGTGDRSERIRTYNFPQGRVTDHRINLTLYRLDAVLEGDLDELCGALIGHYQAEALKAQADAA.

Glutamine 232 carries the post-translational modification N5-methylglutamine. Residues 282 to 291 (KQRAEQEAAR) are compositionally biased toward basic and acidic residues. Residues 282–302 (KQRAEQEAARRSQVGTGDRSE) are disordered.

Belongs to the prokaryotic/mitochondrial release factor family. Post-translationally, methylated by PrmC. Methylation increases the termination efficiency of RF1.

Its subcellular location is the cytoplasm. Functionally, peptide chain release factor 1 directs the termination of translation in response to the peptide chain termination codons UAG and UAA. This chain is Peptide chain release factor 1, found in Solidesulfovibrio magneticus (strain ATCC 700980 / DSM 13731 / RS-1) (Desulfovibrio magneticus).